Here is a 154-residue protein sequence, read N- to C-terminus: Cyanate hydratase (154 aa).

Catalysis depends on residues Arg-100, Glu-103, and Ser-126.

It belongs to the cyanase family.

It carries out the reaction cyanate + hydrogencarbonate + 3 H(+) = NH4(+) + 2 CO2. Its function is as follows. Catalyzes the reaction of cyanate with bicarbonate to produce ammonia and carbon dioxide. This is Cyanate hydratase from Aspergillus fumigatus (strain CBS 144.89 / FGSC A1163 / CEA10) (Neosartorya fumigata).